Consider the following 196-residue polypeptide: MRVKGTNVTRIRRKKMIKLAKGYRGQRHINFKVAKQQVWKSYLYAYRDRKNVKRDYRKLWIARINAASRKNGISYSQLMHGFKVAGIDLNRKMLAELAVSDFATFSKLAETAKKQVSAPTRKAATLDTDIKIERIEKGAAKPVVLEPGKSTKTQEVAVAEKPTTASTVAEIKAYLDSESIKYPSSAKKADLLALVK.

The protein belongs to the bacterial ribosomal protein bL20 family.

Functionally, binds directly to 23S ribosomal RNA and is necessary for the in vitro assembly process of the 50S ribosomal subunit. It is not involved in the protein synthesizing functions of that subunit. This chain is Large ribosomal subunit protein bL20 (rplT), found in Oenococcus oeni (strain ATCC BAA-331 / PSU-1).